Reading from the N-terminus, the 580-residue chain is Alpha-thujene synthase TPS3, chloroplastic (580 aa).

The transit peptide at methionine 1–tyrosine 26 directs the protein to the chloroplast. Residues arginine 296, aspartate 333, aspartate 337, arginine 473, and aspartate 476 each coordinate (2E)-geranyl diphosphate. 2 residues coordinate Mg(2+): aspartate 333 and aspartate 337. Positions aspartate 333–aspartate 337 match the DDXXD motif motif. Mg(2+) contacts are provided by aspartate 476, threonine 480, and glutamate 484.

The protein belongs to the terpene synthase family. Tpsb subfamily. Monomer. Mg(2+) is required as a cofactor. Requires Mn(2+) as cofactor. In terms of tissue distribution, mostly expressed in developing and mature fruits, and, to a lower extent, in male leaves. Barely detectable in female leaves and shoots.

The protein resides in the plastid. The protein localises to the chloroplast. The enzyme catalyses (2E)-geranyl diphosphate = alpha-thujene + diphosphate. It carries out the reaction (2E)-geranyl diphosphate = (1R,5R)-sabinene + diphosphate. It participates in secondary metabolite biosynthesis; terpenoid biosynthesis. Its function is as follows. Monoterpene synthase (TPS) involved in the biosynthesis of monoterpene natural products used by traditional Chinese medicine to treat headache, inflammation and intoxication. Catalyzes the conversion of (2E)-geranyl diphosphate (GPP) into alpha-thujene and (1R,5R)-sabinene. In Litsea cubeba (Aromatic litsea), this protein is Alpha-thujene synthase TPS3, chloroplastic.